Consider the following 472-residue polypeptide: Glutamate--tRNA ligase (472 aa).

The 'HIGH' region signature appears at Pro-7–Gly-17. The Zn(2+) site is built by Cys-96, Cys-98, Cys-123, and His-125. A compositionally biased stretch (basic and acidic residues) spans Ala-112–Pro-129. The disordered stretch occupies residues Ala-112–Pro-134. The short motif at Lys-234–Arg-238 is the 'KMSKS' region element. Residue Lys-237 participates in ATP binding.

It belongs to the class-I aminoacyl-tRNA synthetase family. Glutamate--tRNA ligase type 1 subfamily. In terms of assembly, monomer. Zn(2+) serves as cofactor.

The protein resides in the cytoplasm. It catalyses the reaction tRNA(Glu) + L-glutamate + ATP = L-glutamyl-tRNA(Glu) + AMP + diphosphate. Functionally, catalyzes the attachment of glutamate to tRNA(Glu) in a two-step reaction: glutamate is first activated by ATP to form Glu-AMP and then transferred to the acceptor end of tRNA(Glu). The sequence is that of Glutamate--tRNA ligase from Magnetococcus marinus (strain ATCC BAA-1437 / JCM 17883 / MC-1).